We begin with the raw amino-acid sequence, 305 residues long: Putative beta-lactamase HcpD (305 aa).

The signal sequence occupies residues 1–27; the sequence is MIKSWTKKWFLILFLMASCFGHLVATT. TPR repeat units follow at residues 28–61, 96–133, 168–205, and 240–277; these read GEKYFKMANQALKRGDYHRAVAFYKRSCNLRMGV, HLACASLGSMYEDGDGVQKDFPKAIYYYRRGCHLKGGV, GISCNFVGYMYKSAKGVEKDLKKALANFKRGCHLKDGA, and GSGCHNVAVMYYTGKGAPKDLEKATSYYKKGCALGFSG. 7 cysteine pairs are disulfide-bonded: C55/C63, C91/C99, C127/C135, C163/C171, C199/C207, C235/C243, and C271/C279.

This sequence belongs to the hcp beta-lactamase family.

Its subcellular location is the secreted. It carries out the reaction a beta-lactam + H2O = a substituted beta-amino acid. May hydrolyze 6-aminopenicillinic acid and 7-aminocephalosporanic acid (ACA) derivatives. Binds to penicillin. This Helicobacter pylori (strain J99 / ATCC 700824) (Campylobacter pylori J99) protein is Putative beta-lactamase HcpD (hcpD).